Here is a 94-residue protein sequence, read N- to C-terminus: Co-chaperonin GroES (94 aa).

This sequence belongs to the GroES chaperonin family. In terms of assembly, heptamer of 7 subunits arranged in a ring. Interacts with the chaperonin GroEL.

Its subcellular location is the cytoplasm. Functionally, together with the chaperonin GroEL, plays an essential role in assisting protein folding. The GroEL-GroES system forms a nano-cage that allows encapsulation of the non-native substrate proteins and provides a physical environment optimized to promote and accelerate protein folding. GroES binds to the apical surface of the GroEL ring, thereby capping the opening of the GroEL channel. In Streptococcus pneumoniae (strain ATCC BAA-255 / R6), this protein is Co-chaperonin GroES.